The following is a 54-amino-acid chain: Large ribosomal subunit protein bL32c (54 aa).

The protein belongs to the bacterial ribosomal protein bL32 family.

It is found in the plastid. Its subcellular location is the chloroplast. This is Large ribosomal subunit protein bL32c from Helianthus annuus (Common sunflower).